The primary structure comprises 475 residues: Eukaryotic translation initiation factor 3 subunit L (475 aa).

The region spanning 257–451 (DAIRMFSHIL…DLDYAMQGDL (195 aa)) is the PCI domain.

This sequence belongs to the eIF-3 subunit L family. As to quaternary structure, component of the eukaryotic translation initiation factor 3 (eIF-3) complex.

The protein resides in the cytoplasm. In terms of biological role, component of the eukaryotic translation initiation factor 3 (eIF-3) complex, which is involved in protein synthesis of a specialized repertoire of mRNAs and, together with other initiation factors, stimulates binding of mRNA and methionyl-tRNAi to the 40S ribosome. The eIF-3 complex specifically targets and initiates translation of a subset of mRNAs involved in cell proliferation. The sequence is that of Eukaryotic translation initiation factor 3 subunit L from Botryotinia fuckeliana (strain B05.10) (Noble rot fungus).